A 334-amino-acid polypeptide reads, in one-letter code: uncharacterized protein (334 aa).

Residue Tyr52 is the Proton donor of the active site. The interval 314–334 (LPPPASPNSEPQVTGGCSSMC) is disordered. The span at 320–334 (PNSEPQVTGGCSSMC) shows a compositional bias: polar residues.

This sequence belongs to the aldo/keto reductase family.

It localises to the cytoplasm. The protein resides in the nucleus. This is an uncharacterized protein from Schizosaccharomyces pombe (strain 972 / ATCC 24843) (Fission yeast).